The chain runs to 153 residues: Superoxide dismutase [Cu-Zn] (153 aa).

Cu cation-binding residues include His45, His47, and His62. An intrachain disulfide couples Cys56 to Cys145. 4 residues coordinate Zn(2+): His62, His70, His79, and Asp82. Position 119 (His119) interacts with Cu cation.

It belongs to the Cu-Zn superoxide dismutase family. In terms of assembly, homodimer. Cu cation serves as cofactor. The cofactor is Zn(2+).

The protein resides in the cytoplasm. The enzyme catalyses 2 superoxide + 2 H(+) = H2O2 + O2. Its function is as follows. Destroys radicals which are normally produced within the cells and which are toxic to biological systems. The chain is Superoxide dismutase [Cu-Zn] from Drosophila virilis (Fruit fly).